We begin with the raw amino-acid sequence, 189 residues long: ATP synthase subunit delta (189 aa).

This sequence belongs to the ATPase delta chain family. In terms of assembly, F-type ATPases have 2 components, F(1) - the catalytic core - and F(0) - the membrane proton channel. F(1) has five subunits: alpha(3), beta(3), gamma(1), delta(1), epsilon(1). F(0) has three main subunits: a(1), b(2) and c(10-14). The alpha and beta chains form an alternating ring which encloses part of the gamma chain. F(1) is attached to F(0) by a central stalk formed by the gamma and epsilon chains, while a peripheral stalk is formed by the delta and b chains.

It localises to the cell inner membrane. In terms of biological role, f(1)F(0) ATP synthase produces ATP from ADP in the presence of a proton or sodium gradient. F-type ATPases consist of two structural domains, F(1) containing the extramembraneous catalytic core and F(0) containing the membrane proton channel, linked together by a central stalk and a peripheral stalk. During catalysis, ATP synthesis in the catalytic domain of F(1) is coupled via a rotary mechanism of the central stalk subunits to proton translocation. Functionally, this protein is part of the stalk that links CF(0) to CF(1). It either transmits conformational changes from CF(0) to CF(1) or is implicated in proton conduction. This chain is ATP synthase subunit delta, found in Methylorubrum extorquens (strain PA1) (Methylobacterium extorquens).